A 284-amino-acid chain; its full sequence is 2-dehydro-3-deoxyphosphooctonate aldolase (284 aa).

It belongs to the KdsA family.

It is found in the cytoplasm. The enzyme catalyses D-arabinose 5-phosphate + phosphoenolpyruvate + H2O = 3-deoxy-alpha-D-manno-2-octulosonate-8-phosphate + phosphate. The protein operates within carbohydrate biosynthesis; 3-deoxy-D-manno-octulosonate biosynthesis; 3-deoxy-D-manno-octulosonate from D-ribulose 5-phosphate: step 2/3. It functions in the pathway bacterial outer membrane biogenesis; lipopolysaccharide biosynthesis. The sequence is that of 2-dehydro-3-deoxyphosphooctonate aldolase from Klebsiella pneumoniae subsp. pneumoniae (strain ATCC 700721 / MGH 78578).